Reading from the N-terminus, the 365-residue chain is Alpha-keto acid-binding periplasmic protein TakP (365 aa).

The tat-type signal signal peptide spans 1–26 (MDRRSFITKAAVGGAAASALAAPALA). Residues 99–100 (YY), Q156, and R177 each bind substrate. A Na(+)-binding site is contributed by Q156. Na(+)-binding residues include E214, W215, and E240.

Belongs to the bacterial solute-binding protein 7 family. In terms of assembly, homodimer. The complex comprises the extracytoplasmic solute receptor protein TakP, and the two transmembrane proteins TakQ and TakM. Predicted to be exported by the Tat system. The position of the signal peptide cleavage has not been experimentally proven.

It localises to the periplasm. Its function is as follows. Part of the tripartite ATP-independent periplasmic (TRAP) transport system TakPQM involved in the uptake of alpha-keto acids. This protein specifically binds alpha-keto acids including pyruvate, oxobutyrate, oxovalerate and 4-methyl-2-oxovalerate. Ligand-binding affinity increases with the increasing chain length of the aliphatic backbone of the ligand. Is not able to bind alpha-ketoglutarate. The polypeptide is Alpha-keto acid-binding periplasmic protein TakP (Cereibacter sphaeroides (strain ATCC 17023 / DSM 158 / JCM 6121 / CCUG 31486 / LMG 2827 / NBRC 12203 / NCIMB 8253 / ATH 2.4.1.) (Rhodobacter sphaeroides)).